Reading from the N-terminus, the 1049-residue chain is Multidrug efflux pump subunit AcrB (1049 aa).

Over 1–9 the chain is Cytoplasmic; sequence MPNFFIDRP. The chain crosses the membrane as a helical span at residues 10-28; that stretch reads IFAWVIAIIIMLAGGLAIL. Residues 29 to 336 lie on the Periplasmic side of the membrane; the sequence is KLPVAQYPTI…YDTTPFVKIS (308 aa). The chain crosses the membrane as a helical span at residues 337 to 356; sequence IHEVVKTLVEAIILVFLVMY. At 357–365 the chain is on the cytoplasmic side; that stretch reads LFLQNFRAT. A helical membrane pass occupies residues 366-385; that stretch reads LIPTIAVPVVLLGTFAVLAA. The Periplasmic portion of the chain corresponds to 386–391; that stretch reads FGFSIN. Residues 392–413 traverse the membrane as a helical segment; sequence TLTMFGMVLAIGLLVDDAIVVV. Over 414–438 the chain is Cytoplasmic; that stretch reads ENVERVMAEEGLPPKEATRKSMGQI. The helical transmembrane segment at 439 to 457 threads the bilayer; that stretch reads QGALVGIAMVLSAVFVPMA. Residues 458 to 465 lie on the Periplasmic side of the membrane; sequence FFGGSTGA. The chain crosses the membrane as a helical span at residues 466–490; the sequence is IYRQFSITIVSAMALSVLVALILTP. The Cytoplasmic segment spans residues 491 to 538; the sequence is ALCATMLKPIAKGDHGEGKKGFFGWFNRMFEKSTHHYTDSVGGILRST. The helical transmembrane segment at 539–555 threads the bilayer; sequence GRYLVLYLIIVVGMAYL. Over 556–871 the chain is Periplasmic; the sequence is FVRLPSSFLP…MSYQERLSGN (316 aa). Residues 872–888 traverse the membrane as a helical segment; it reads QAPSLYAISLIVVFLCL. Residues 889 to 898 lie on the Cytoplasmic side of the membrane; sequence AALYESWSIP. A helical membrane pass occupies residues 899–918; that stretch reads FSVMLVVPLGVIGALLAATF. The Periplasmic portion of the chain corresponds to 919–924; it reads RGLTND. A helical transmembrane segment spans residues 925–943; it reads VYFQVGLLTTIGLSAKNAI. Over 944–972 the chain is Cytoplasmic; it reads LIVEFAKDLMDKEGKGLIEATLDAVRMRL. A helical membrane pass occupies residues 973 to 992; the sequence is RPILMTSLAFILGVMPLVIS. Residues 993–998 are Periplasmic-facing; it reads TGAGSG. Residues 999 to 1018 traverse the membrane as a helical segment; that stretch reads AQNAVGTGVMGGMVTATVLA. The Cytoplasmic segment spans residues 1019 to 1049; the sequence is IFFVPVFFVVVRRRFSRKNEDIEHSHTVDHH.

This sequence belongs to the resistance-nodulation-cell division (RND) (TC 2.A.6) family. Homotrimer, with large domains that extend into the periplasm, interacts with AcrA and TolC. AcrA may be required to stably link this protein and TolC. Interacts with AcrZ. Part of the AcrA-AcrB-AcrZ-TolC efflux pump.

Its subcellular location is the cell inner membrane. Its function is as follows. AcrA-AcrB-AcrZ-TolC is a drug efflux protein complex with broad substrate specificity that uses the proton motive force to export substrates. (Microbial infection) Involved in contact-dependent growth inhibition (CDI), acts downstream of BamA, the receptor for CDI. Its role in CDI is independent of the AcrA-AcrB-TolC efflux pump complex. The protein is Multidrug efflux pump subunit AcrB (acrB) of Escherichia coli (strain K12).